The sequence spans 336 residues: Dihydroorotate dehydrogenase (quinone) (336 aa).

FMN contacts are provided by residues 62-66 (AGLDK) and threonine 86. Lysine 66 serves as a coordination point for substrate. 111–115 (NRMGF) contacts substrate. FMN-binding residues include asparagine 139 and asparagine 172. A substrate-binding site is contributed by asparagine 172. The active-site Nucleophile is the serine 175. Residue asparagine 177 participates in substrate binding. 2 residues coordinate FMN: lysine 217 and threonine 245. Substrate is bound at residue 246–247 (NT). FMN contacts are provided by residues glycine 268, glycine 297, and 318-319 (YS).

Belongs to the dihydroorotate dehydrogenase family. Type 2 subfamily. Monomer. Requires FMN as cofactor.

It is found in the cell membrane. It catalyses the reaction (S)-dihydroorotate + a quinone = orotate + a quinol. It functions in the pathway pyrimidine metabolism; UMP biosynthesis via de novo pathway; orotate from (S)-dihydroorotate (quinone route): step 1/1. Catalyzes the conversion of dihydroorotate to orotate with quinone as electron acceptor. The protein is Dihydroorotate dehydrogenase (quinone) of Klebsiella pneumoniae subsp. pneumoniae (strain ATCC 700721 / MGH 78578).